The following is a 107-amino-acid chain: Ribonuclease P protein component 4 (107 aa).

Positions 62, 65, 87, and 90 each coordinate Zn(2+).

This sequence belongs to the eukaryotic/archaeal RNase P protein component 4 family. As to quaternary structure, consists of a catalytic RNA component and at least 4-5 protein subunits. Zn(2+) is required as a cofactor.

Its subcellular location is the cytoplasm. It carries out the reaction Endonucleolytic cleavage of RNA, removing 5'-extranucleotides from tRNA precursor.. Functionally, part of ribonuclease P, a protein complex that generates mature tRNA molecules by cleaving their 5'-ends. This is Ribonuclease P protein component 4 from Archaeoglobus fulgidus (strain ATCC 49558 / DSM 4304 / JCM 9628 / NBRC 100126 / VC-16).